The primary structure comprises 288 residues: Bifunctional protein FolD (288 aa).

NADP(+)-binding positions include 166-168 (GAS) and isoleucine 232.

Belongs to the tetrahydrofolate dehydrogenase/cyclohydrolase family. Homodimer.

The enzyme catalyses (6R)-5,10-methylene-5,6,7,8-tetrahydrofolate + NADP(+) = (6R)-5,10-methenyltetrahydrofolate + NADPH. The catalysed reaction is (6R)-5,10-methenyltetrahydrofolate + H2O = (6R)-10-formyltetrahydrofolate + H(+). The protein operates within one-carbon metabolism; tetrahydrofolate interconversion. In terms of biological role, catalyzes the oxidation of 5,10-methylenetetrahydrofolate to 5,10-methenyltetrahydrofolate and then the hydrolysis of 5,10-methenyltetrahydrofolate to 10-formyltetrahydrofolate. In Escherichia coli O139:H28 (strain E24377A / ETEC), this protein is Bifunctional protein FolD.